The chain runs to 288 residues: MTSRLPISQPEHSPSWHAELHLGFARAGERTVLRENRHRGPLRVQKALYPEGEAVCQTIVLHPPSGIAGGDHLAISAEVGEGSHAQLTTPGAGKWYRSGGAEASQRVAFTVGEGATLEWLPQETIVFDGARARMETQVDLAADSRYIGWDILCLGRVAAGERFEKGRFDLFLQVNRDQRPIWIERGGFDGSDPMLISPAGWAGATVCGTLLCAFPEWPMQASALLEACRKIVPADGAQHGLSALPGVLIARYLGNSSEAARLWFAELWTILRPACCGRPAVIPRIWNT.

It belongs to the UreD family. In terms of assembly, ureD, UreF and UreG form a complex that acts as a GTP-hydrolysis-dependent molecular chaperone, activating the urease apoprotein by helping to assemble the nickel containing metallocenter of UreC. The UreE protein probably delivers the nickel.

It is found in the cytoplasm. In terms of biological role, required for maturation of urease via the functional incorporation of the urease nickel metallocenter. This Dechloromonas aromatica (strain RCB) protein is Urease accessory protein UreD.